The primary structure comprises 84 residues: Toxin BmKaTx13 (84 aa).

An N-terminal signal peptide occupies residues 1–19; it reads MNYLVMISFALLLMKGVES. The 63-residue stretch at 21–83 folds into the LCN-type CS-alpha/beta domain; it reads RDAYIAKPEN…VPIRVPGKCH (63 aa). Disulfide bonds link cysteine 31/cysteine 82, cysteine 35/cysteine 55, cysteine 41/cysteine 65, and cysteine 45/cysteine 67. Arginine 84 is a propeptide (removed by a carboxypeptidase).

Belongs to the long (4 C-C) scorpion toxin superfamily. Sodium channel inhibitor family. Alpha subfamily. In terms of tissue distribution, expressed by the venom gland.

The protein resides in the secreted. Its function is as follows. Alpha toxins bind voltage-independently at site-3 of sodium channels (Nav) and inhibit the inactivation of the activated channels, thereby blocking neuronal transmission. This toxin is active against mammals. The chain is Toxin BmKaTx13 from Olivierus martensii (Manchurian scorpion).